A 240-amino-acid polypeptide reads, in one-letter code: Insulin-like growth factor-binding protein 3 receptor (240 aa).

Positions 1–38 are cleaved as a signal peptide; sequence MGNCQAGHNLHLCLAHHPPLVCATLILLLLGLSGLGLG. Residues 39–204 are Extracellular-facing; sequence SFLLTHRTGL…SEELALCGSR (166 aa). Residues Asn-73, Asn-101, and Asn-167 are each glycosylated (N-linked (GlcNAc...) asparagine). The chain crosses the membrane as a helical span at residues 205 to 225; it reads LLVLGSFLLLFCGLLCCVTAM. Residues 226–240 lie on the Cytoplasmic side of the membrane; it reads CFHPRRESHWSRTRL.

In terms of assembly, interacts with IGFBP3. Interacts with CASP8. In terms of tissue distribution, widely expressed in normal tissues but suppressed in prostate and breast tumor.

It localises to the cell membrane. Its function is as follows. Cell death receptor specific for IGFBP3, may mediate caspase-8-dependent apoptosis upon ligand binding. This chain is Insulin-like growth factor-binding protein 3 receptor (TMEM219), found in Homo sapiens (Human).